The following is a 494-amino-acid chain: UPF0371 protein M6_Spy1067 (494 aa).

This sequence belongs to the UPF0371 family.

This chain is UPF0371 protein M6_Spy1067, found in Streptococcus pyogenes serotype M6 (strain ATCC BAA-946 / MGAS10394).